A 968-amino-acid chain; its full sequence is RNA polymerase-associated protein RapA (968 aa).

Residues 164 to 334 (DVGRRHAPRV…FARLRLLDPN (171 aa)) form the Helicase ATP-binding domain. ATP is bound at residue 177–184 (DEVGLGKT). Positions 280–283 (DEAH) match the DEAH box motif. The Helicase C-terminal domain occupies 490-644 (RVEWLMGYLT…TCPTGRAIYD (155 aa)).

It belongs to the SNF2/RAD54 helicase family. RapA subfamily. Interacts with the RNAP. Has a higher affinity for the core RNAP than for the holoenzyme. Its ATPase activity is stimulated by binding to RNAP.

In terms of biological role, transcription regulator that activates transcription by stimulating RNA polymerase (RNAP) recycling in case of stress conditions such as supercoiled DNA or high salt concentrations. Probably acts by releasing the RNAP, when it is trapped or immobilized on tightly supercoiled DNA. Does not activate transcription on linear DNA. Probably not involved in DNA repair. In Salmonella arizonae (strain ATCC BAA-731 / CDC346-86 / RSK2980), this protein is RNA polymerase-associated protein RapA.